We begin with the raw amino-acid sequence, 318 residues long: Ethylene-responsive transcription factor FZP (318 aa).

The segment covering 1-15 has biased composition (low complexity); the sequence is MNTRGSGSSSSSSSS. Disordered regions lie at residues 1–59 and 158–178; these read MNTR…GRFL and SYGHHHHHHHHHGHGAASGAS. Residues 25–37 are compositionally biased toward pro residues; it reads PPKPASQPSPPSS. Residues 57-114 constitute a DNA-binding region (AP2/ERF); that stretch reads RFLGVRRRPWGRYAAEIRDPTTKERHWLGTFDTAQEAALAYDRAALSMKGAQARTNFV. Over residues 160–171 the composition is skewed to basic residues; the sequence is GHHHHHHHHHGH.

Belongs to the AP2/ERF transcription factor family. ERF subfamily.

The protein localises to the nucleus. In terms of biological role, required to prevent the formation of axillary meristems within the spikelet meristem and permit the subsequent establishment of floral meristem identity. Mediates the transition from spikelet to floret meristem. Determines the transition from panicle branching to spikelet formation. May specify floral organ identity by regulating the class B genes (Agamous-like genes) MADS6 and MADS17, as well as class E genes MADS1, MADS7 and MADS8 in floral meristem. Possesses transactivation activity. This chain is Ethylene-responsive transcription factor FZP, found in Oryza sativa subsp. japonica (Rice).